A 180-amino-acid chain; its full sequence is NADH-ubiquinone oxidoreductase chain 5 (180 aa).

A helical membrane pass occupies residues 131-148; the sequence is VYHYAFAMLLGSTPFVTF.

It belongs to the complex I subunit 5 family.

It is found in the mitochondrion inner membrane. It catalyses the reaction a ubiquinone + NADH + 5 H(+)(in) = a ubiquinol + NAD(+) + 4 H(+)(out). Its function is as follows. Core subunit of the mitochondrial membrane respiratory chain NADH dehydrogenase (Complex I) that is believed to belong to the minimal assembly required for catalysis. Complex I functions in the transfer of electrons from NADH to the respiratory chain. The immediate electron acceptor for the enzyme is believed to be ubiquinone. The polypeptide is NADH-ubiquinone oxidoreductase chain 5 (ND5) (Zea mays (Maize)).